The primary structure comprises 444 residues: Serine carboxypeptidase-like 50 (444 aa).

An N-terminal signal peptide occupies residues 1-22 (MEQATTLFILLSTLLLAVSVES). Cysteines 79 and 308 form a disulfide. S170 is an active-site residue. N263 carries N-linked (GlcNAc...) asparagine glycosylation. D345 is an active-site residue. N-linked (GlcNAc...) asparagine glycosylation is present at N361. The active site involves H403.

The protein belongs to the peptidase S10 family. Ubiquitous.

It localises to the secreted. In terms of biological role, probable carboxypeptidase. This is Serine carboxypeptidase-like 50 (SCPL50) from Arabidopsis thaliana (Mouse-ear cress).